The sequence spans 458 residues: Methylenetetrahydrofolate--tRNA-(uracil-5-)-methyltransferase TrmFO (458 aa).

11-16 lines the FAD pocket; sequence GGGMAG.

The protein belongs to the MnmG family. TrmFO subfamily. FAD is required as a cofactor.

The protein localises to the cytoplasm. The catalysed reaction is uridine(54) in tRNA + (6R)-5,10-methylene-5,6,7,8-tetrahydrofolate + NADH + H(+) = 5-methyluridine(54) in tRNA + (6S)-5,6,7,8-tetrahydrofolate + NAD(+). It carries out the reaction uridine(54) in tRNA + (6R)-5,10-methylene-5,6,7,8-tetrahydrofolate + NADPH + H(+) = 5-methyluridine(54) in tRNA + (6S)-5,6,7,8-tetrahydrofolate + NADP(+). In terms of biological role, catalyzes the folate-dependent formation of 5-methyl-uridine at position 54 (M-5-U54) in all tRNAs. This chain is Methylenetetrahydrofolate--tRNA-(uracil-5-)-methyltransferase TrmFO, found in Jannaschia sp. (strain CCS1).